A 195-amino-acid polypeptide reads, in one-letter code: dITP/XTP pyrophosphatase (195 aa).

9-14 provides a ligand contact to substrate; the sequence is TNNQGK. Residues Glu-39 and Asp-68 each coordinate Mg(2+). The active-site Proton acceptor is the Asp-68. Substrate is bound by residues Ser-69, 146-149, Lys-169, and 174-175; these read FGYD and HR.

It belongs to the HAM1 NTPase family. In terms of assembly, homodimer. Mg(2+) is required as a cofactor.

The catalysed reaction is XTP + H2O = XMP + diphosphate + H(+). It catalyses the reaction dITP + H2O = dIMP + diphosphate + H(+). It carries out the reaction ITP + H2O = IMP + diphosphate + H(+). Its function is as follows. Pyrophosphatase that catalyzes the hydrolysis of nucleoside triphosphates to their monophosphate derivatives, with a high preference for the non-canonical purine nucleotides XTP (xanthosine triphosphate), dITP (deoxyinosine triphosphate) and ITP. Seems to function as a house-cleaning enzyme that removes non-canonical purine nucleotides from the nucleotide pool, thus preventing their incorporation into DNA/RNA and avoiding chromosomal lesions. The polypeptide is dITP/XTP pyrophosphatase (Gloeobacter violaceus (strain ATCC 29082 / PCC 7421)).